The following is a 260-amino-acid chain: UPF0246 protein Bcenmc03_2247 (260 aa).

This sequence belongs to the UPF0246 family.

This chain is UPF0246 protein Bcenmc03_2247, found in Burkholderia orbicola (strain MC0-3).